The sequence spans 148 residues: SsrA-binding protein (148 aa).

The protein belongs to the SmpB family.

The protein resides in the cytoplasm. In terms of biological role, required for rescue of stalled ribosomes mediated by trans-translation. Binds to transfer-messenger RNA (tmRNA), required for stable association of tmRNA with ribosomes. tmRNA and SmpB together mimic tRNA shape, replacing the anticodon stem-loop with SmpB. tmRNA is encoded by the ssrA gene; the 2 termini fold to resemble tRNA(Ala) and it encodes a 'tag peptide', a short internal open reading frame. During trans-translation Ala-aminoacylated tmRNA acts like a tRNA, entering the A-site of stalled ribosomes, displacing the stalled mRNA. The ribosome then switches to translate the ORF on the tmRNA; the nascent peptide is terminated with the 'tag peptide' encoded by the tmRNA and targeted for degradation. The ribosome is freed to recommence translation, which seems to be the essential function of trans-translation. This is SsrA-binding protein from Burkholderia ambifaria (strain ATCC BAA-244 / DSM 16087 / CCUG 44356 / LMG 19182 / AMMD) (Burkholderia cepacia (strain AMMD)).